The chain runs to 146 residues: Prolactin-inducible protein (146 aa).

The N-terminal stretch at 1 to 28 (MRLLQLLFRASPATLLLVLCLQLGANKA) is a signal peptide. Gln29 bears the Pyrrolidone carboxylic acid mark. Cystine bridges form between Cys65-Cys91 and Cys89-Cys123. Asn105 is a glycosylation site (N-linked (GlcNAc...) asparagine).

The protein belongs to the PIP family. Monomer. Interacts with AZGP1. Expressed in pathological conditions of the mammary gland and in several exocrine tissues, such as the lacrimal, salivary, and sweat glands.

It localises to the secreted. In Homo sapiens (Human), this protein is Prolactin-inducible protein (PIP).